The chain runs to 799 residues: Homeobox protein engrailed (799 aa).

4 disordered regions span residues 189–331 (LPSR…DATK), 369–444 (GNFL…SLRQ), 554–664 (HPFL…DKAK), and 678–705 (SDRPSSGPRSRKPKRSKAQDEKRPRTAF). Polar residues predominate over residues 210–222 (QSPSTSIRSNLVS). Composition is skewed to basic and acidic residues over residues 228-239 (SRRDDQETSDSC) and 246-256 (RAINDSERYDV). Polar residues-rich tracts occupy residues 284–299 (LNLTTTGGDSVSQLFH) and 377–401 (HTFQPNEDHQTVSSAQTTPRFSSPD). Positions 416–431 (ESLSSPSSSSSSSRSS) are enriched in low complexity. 2 stretches are compositionally biased toward basic and acidic residues: residues 608-619 (DQKKRSRDESAS) and 629-648 (VHLKENSQKSDPVLKQEKGN). Residues 698 to 757 (EKRPRTAFTNDQLQRLKREFDECRYLTETRRKNLADELGLTESQIKIWFQNKRAKIKKSV) constitute a DNA-binding region (homeobox).

The protein belongs to the engrailed homeobox family. As to expression, expressed in the dorsal ectoderm of early gastrulae in a band corresponding to the peripheral area of the presumptive shell gland. Also expressed at four points along the posterior ectoderm. In late gastrulae, it is predominantly expressed in the peripheral ectoderm of the shell gland and in spots at the posterior end behind the presumptive foot. Expressed in late trochophore larvae at four points behind the foot, at two locations at the base of the foot and in the peripheral ectoderm of the shell gland.

The protein localises to the nucleus. Functionally, may be involved in shell and shell gland formation during development. The chain is Homeobox protein engrailed from Lymnaea stagnalis (Great pond snail).